Reading from the N-terminus, the 258-residue chain is MSDTQEYSIKPFDANLINPREDNFNTVGGSKIVVIGKAGTGKSTLIRYLLFLKRSIIPVGMVVSGTEDSNCFYSDIFPPLFIHDEYDEEIIKKFIKRQKYANEHISENPWAVLLLDDCTEDKKIFSSKWQQSLFKNGRHWKLLYILSLQHATDIPPAIRTNVDGVFIFRETNENNLKNIYLNYAGVIPKFEIFKAYMTQVTGDYTALYIDNSAQDNGEWYEHVYYWKVPQMDTRDMKFGCHEYIEFGKQRYNEKYSKN.

36–43 is an ATP binding site; sequence GKAGTGKS.

Belongs to the IIV-6 075L family.

This is an uncharacterized protein from Acheta domesticus (House cricket).